Reading from the N-terminus, the 259-residue chain is MTQIHPTAIVSSTAEIHETASIGPYCIVGDNVSIGAGTKLLRHVVVTKNTRIGKNNEIFQFASIGEDCQDLKYNGEETWLEIGDNNSIREACSFHRGTIQDNSLTKIGSNNLFMVNTHIAHDCIVGDGNILANNVGVAGHVHIGNNVILGGNAGVHQFCQIGDYSLVGGGSVILKDVAAMTLVSGNPAQAHGLNIEGMRRKDWSKETINTLRTAYKLIFKSGKTTEEVIEELTQDFLPQEPKVQLLIDSLLSSKRGIIR.

This sequence belongs to the transferase hexapeptide repeat family. LpxA subfamily. As to quaternary structure, homotrimer.

It localises to the cytoplasm. The catalysed reaction is a (3R)-hydroxyacyl-[ACP] + UDP-N-acetyl-alpha-D-glucosamine = a UDP-3-O-[(3R)-3-hydroxyacyl]-N-acetyl-alpha-D-glucosamine + holo-[ACP]. Its pathway is glycolipid biosynthesis; lipid IV(A) biosynthesis; lipid IV(A) from (3R)-3-hydroxytetradecanoyl-[acyl-carrier-protein] and UDP-N-acetyl-alpha-D-glucosamine: step 1/6. Its function is as follows. Involved in the biosynthesis of lipid A, a phosphorylated glycolipid that anchors the lipopolysaccharide to the outer membrane of the cell. In Psychrobacter sp. (strain PRwf-1), this protein is Acyl-[acyl-carrier-protein]--UDP-N-acetylglucosamine O-acyltransferase.